The chain runs to 396 residues: Protein RepA (396 aa).

2 disordered regions span residues 141-170 (SKEL…VTKK) and 356-396 (NQYK…LPTT). Residues 154-168 (KDSEEEPEKKPEEVT) show a composition bias toward basic and acidic residues.

This Bacillus subtilis protein is Protein RepA (repA).